We begin with the raw amino-acid sequence, 974 residues long: MSDQKFISIRGAREHNLKNVDLDLPRDKLIVMTGLSGSGKSSLAFDTIYAEGQRRYVESLSAYARQFLEMMQKPDVDQIDGLSPAISIEQKTTSRNPRSTVGTVTEIYDYMRLLFARVGIPYSPATGLPIESQTVSQMVDRVIALEEGTRLYILAPIVRGRKGEYRKELAELQKKGFQRVKVDGTFYEIADVPPLDKKYKHDIDVVVDRVVVRPDLSTRLADSLETCLKLADGLAIAEFADKPLPVGETAEGGSANKSANETHERILFSEKFACPVSGFTIPEIEPRLFSFNNPFGACPTCDGLGTQQAIDPNLIIPDESAALKDGAVAPWARSSSPYYNQTLEALGKAYGFKVSARWSELSEEARQAILYGTKGREITFHYDDGLRSYQTTKPFEGVIPNLERRWKETDSAWSREEIERFMASTPCPACNGYRLKPEALSVKIGKKHIGEITEMSIRKADAWFRDIDGSFNEKQREIAARILKAIRERLQFLNNVGLDYLTLARNSGTLSGGESQRIRLASQIGSGLTGVLYVLDEPSIGLHQRDNARLLDTLRHLRDLGNTVIVVEHDEDAILTADYVVDIGPAAGVHGGKVIAQGSPQDIMANTNSLTGKYLSGAMEVAVPAERRKISKTKRLRVVGARGNNLKNVSADIPLGTFTAVTGVSGGGKSTFLIETLFKAASRRIMGSREHPAEHDRIEGLEFLDKVIDIDQSPIGRTPRSNPATYTGAFTPIRDWFAGLPEAKARGYQPGRFSFNVKGGRCEACQGDGVIKIEMHFLPDVYVTCDVCHGKRYNRETLDVLFKGKSIADVLDMTVEEGAEFFSAVPAVRDKLETLVKVGLGYIKVGQQATTLSGGEAQRVKLAKELSRRATGRTLYILDEPTTGLHFHDVAKLLEVLHELVEQGNTVVVIEHNLEVIKTADWVIDLGPEGGDGGGEIVAVGRPEDIVQEKRSYTGQFLKELLERRPKRSSQAAE.

34–41 (GLSGSGKS) is an ATP binding site. ABC transporter domains follow at residues 331–610 (WARS…TNSL) and 630–959 (ISKT…QFLK). Residue 663-670 (GVSGGGKS) coordinates ATP. The segment at 762 to 788 (CEACQGDGVIKIEMHFLPDVYVTCDVC) adopts a C4-type zinc-finger fold.

It belongs to the ABC transporter superfamily. UvrA family. In terms of assembly, forms a heterotetramer with UvrB during the search for lesions.

It localises to the cytoplasm. Functionally, the UvrABC repair system catalyzes the recognition and processing of DNA lesions. UvrA is an ATPase and a DNA-binding protein. A damage recognition complex composed of 2 UvrA and 2 UvrB subunits scans DNA for abnormalities. When the presence of a lesion has been verified by UvrB, the UvrA molecules dissociate. The protein is UvrABC system protein A of Brucella abortus (strain 2308).